The sequence spans 506 residues: Pisatin demethylase (506 aa).

Position 453 (C453) interacts with heme.

The protein belongs to the cytochrome P450 family. The cofactor is heme.

Functionally, can detoxify the phytoalexin pisatin from garden pea. Pisatin is an antimicrobial compound produced by pea in response to infection by plant pathogens. This chain is Pisatin demethylase (PDA6-1), found in Fusarium vanettenii (Neocosmospora pisi).